The primary structure comprises 98 residues: N(2)-fixation sustaining protein CowN (98 aa).

The protein belongs to the CowN family.

In terms of biological role, is required to sustain N(2)-dependent growth in the presence of low levels of carbon monoxide (CO). Probably acts by protecting the N(2) fixation ability of the nitrogenase complex, which is inactivated in the presence of CO. The chain is N(2)-fixation sustaining protein CowN from Azospirillum sp. (strain B510).